The sequence spans 1482 residues: Glutamate receptor ionotropic, NMDA 2B (1482 aa).

A signal peptide spans 1–26 (MKPSAECCSPKFWLVLAVLAVSGSKA). Over 27–557 (RSQKSAPSIG…SAFLEPFSAD (531 aa)) the chain is Extracellular. Residue asparagine 74 is glycosylated (N-linked (GlcNAc...) asparagine). The cysteines at positions 86 and 321 are disulfide-linked. 2 residues coordinate Zn(2+): histidine 127 and glutamate 284. N-linked (GlcNAc...) asparagine glycans are attached at residues asparagine 341, asparagine 348, asparagine 444, and asparagine 491. Cystine bridges form between cysteine 429–cysteine 456 and cysteine 436–cysteine 457. Threonine 514 and arginine 519 together coordinate L-glutamate. A glycan (N-linked (GlcNAc...) asparagine) is linked at asparagine 542. A helical membrane pass occupies residues 558–576 (VWVMMFVMLLIVSAVAVFV). Over 577-603 (FEYFSPVGYNRCLADGREPGGPSFTIG) the chain is Cytoplasmic. An intramembrane region (discontinuously helical) is located at residues 604 to 623 (KAIWLLWGLVFNNSVPVQNP). The interval 604 to 623 (KAIWLLWGLVFNNSVPVQNP) is pore-forming. The Cytoplasmic portion of the chain corresponds to 624–630 (KGTTSKI). A helical membrane pass occupies residues 631–646 (MVSVWAFFAVIFLASY). Over 647–817 (TANLAAFMIQ…VMSSQLDIDN (171 aa)) the chain is Extracellular. An N-linked (GlcNAc...) asparagine glycan is attached at asparagine 688. L-glutamate is bound by residues 690 to 691 (ST) and aspartate 732. Cysteine 746 and cysteine 801 are joined by a disulfide. A helical membrane pass occupies residues 818–837 (MAGVFYMLGAAMALSLITFI). Over 838–1482 (CEHLFYWQFR…EKLSSIESDV (645 aa)) the chain is Cytoplasmic. A phosphoserine mark is found at serine 882, serine 886, serine 917, and serine 920. Phosphotyrosine is present on residues tyrosine 962 and tyrosine 1039. 3 positions are modified to phosphoserine: serine 1058, serine 1061, and serine 1064. Positions 1074–1097 (EGNAAKRRKQQYKDSLKKRPASAK) are disordered. Phosphotyrosine occurs at positions 1109 and 1133. A Phosphoserine modification is found at serine 1143. Tyrosine 1155 carries the phosphotyrosine modification. Residues 1162–1194 (FKRDSVSGGGPCTNRSHLKHGTGDKHGVVGGVP) are disordered. A phosphoserine mark is found at serine 1255 and serine 1259. Residues 1266–1277 (PAAPVAVSSNAS) are compositionally biased toward low complexity. Residues 1266–1301 (PAAPVAVSSNASTTKYPQSPTNSKAQKKNRNKLRRQ) are disordered. Residues 1278-1289 (TTKYPQSPTNSK) are compositionally biased toward polar residues. The segment covering 1290 to 1301 (AQKKNRNKLRRQ) has biased composition (basic residues). Positions 1292-1304 (KKNRNKLRRQHSY) are interaction with DAPK1. Serine 1303 carries the phosphoserine; by DAPK1 modification. Phosphotyrosine is present on tyrosine 1472. The PDZ-binding signature appears at 1480–1482 (SDV).

It belongs to the glutamate-gated ion channel (TC 1.A.10.1) family. NR2B/GRIN2B subfamily. In terms of assembly, heterotetramer. Forms heterotetrameric channels composed of two GluN1/zeta subunits (GRIN1), and two identical GluN2/epsilon subunits (GRIN2A, GRIN2B, GRIN2C or GRIN2D) or GluN3 subunits (GRIN3A or GRIN3B) (in vitro). Can also form heterotetrameric channels that contain at least two GluN1 subunits and at least two different GluN2 subunits (or a combination of one GluN2 and one GluN3 subunits) (in vitro). In vivo, the subunit composition may depend on the expression levels of the different subunits. Found in a complex with GRIN1, GRIN3A and PPP2CB. Interacts with MAGI3. Interacts with HIP1 and NETO1. Interacts with PDZ domains of PATJ, DLG3 and DLG4. Interacts with DAPK1. Found in a complex with GRIN1 and PRR7. Interacts with PRR7. Interacts with CAMK2A. Interacts with ARC; preventing ARC oligomerization. Interacts with TMEM25. Interacts (via the extreme C-terminus) with FRMPD2 (via the second PDZ domain); the interaction is direct and is likely to promote NMDAR-mediated neural signal transmission. GRIN2A binds FRMPD2 with lower affinity than GRIN2B. Interacts with FAM81A; the interaction facilitates condensate formation via liquid-liquid phase separation. In terms of processing, phosphorylated on tyrosine residues. Phosphorylation at Ser-1303 by DAPK1 enhances synaptic NMDA receptor channel activity. As to expression, detected in brain (at protein level). Detected throughout the brain, and in brain stem trigeminal nucleus. Detected in forebrain.

It is found in the cell membrane. The protein resides in the postsynaptic cell membrane. It localises to the cell projection. The protein localises to the dendrite. Its subcellular location is the late endosome. It is found in the lysosome. The protein resides in the cytoplasm. It localises to the cytoskeleton. It catalyses the reaction Ca(2+)(in) = Ca(2+)(out). The enzyme catalyses Na(+)(in) = Na(+)(out). It carries out the reaction K(+)(in) = K(+)(out). In terms of biological role, component of N-methyl-D-aspartate (NMDA) receptors (NMDARs) that function as heterotetrameric, ligand-gated cation channels with high calcium permeability and voltage-dependent block by Mg(2+). Participates in synaptic plasticity for learning and memory formation by contributing to the long-term depression (LTD) of hippocampus membrane currents. Channel activation requires binding of the neurotransmitter L-glutamate to the GluN2 subunit, glycine or D-serine binding to the GluN1 subunit, plus membrane depolarization to eliminate channel inhibition by Mg(2+). NMDARs mediate simultaneously the potasium efflux and the influx of calcium and sodium. Each GluN2 subunit confers differential attributes to channel properties, including activation, deactivation and desensitization kinetics, pH sensitivity, Ca2(+) permeability, and binding to allosteric modulators. In concert with DAPK1 at extrasynaptic sites, acts as a central mediator for stroke damage. Its phosphorylation at Ser-1303 by DAPK1 enhances synaptic NMDA receptor channel activity inducing injurious Ca2+ influx through them, resulting in an irreversible neuronal death. The chain is Glutamate receptor ionotropic, NMDA 2B from Mus musculus (Mouse).